The sequence spans 94 residues: Integration host factor subunit beta (94 aa).

The protein belongs to the bacterial histone-like protein family. As to quaternary structure, heterodimer of an alpha and a beta chain.

Functionally, this protein is one of the two subunits of integration host factor, a specific DNA-binding protein that functions in genetic recombination as well as in transcriptional and translational control. The sequence is that of Integration host factor subunit beta from Dechloromonas aromatica (strain RCB).